The sequence spans 509 residues: ATP synthase subunit beta (509 aa).

The tract at residues 1–28 (MAKAATPKETAAAKKPAAPKKAASAKTA) is disordered. ATP is bound at residue 187 to 194 (GGAGVGKT).

This sequence belongs to the ATPase alpha/beta chains family. F-type ATPases have 2 components, CF(1) - the catalytic core - and CF(0) - the membrane proton channel. CF(1) has five subunits: alpha(3), beta(3), gamma(1), delta(1), epsilon(1). CF(0) has three main subunits: a(1), b(2) and c(9-12). The alpha and beta chains form an alternating ring which encloses part of the gamma chain. CF(1) is attached to CF(0) by a central stalk formed by the gamma and epsilon chains, while a peripheral stalk is formed by the delta and b chains.

Its subcellular location is the cell inner membrane. It catalyses the reaction ATP + H2O + 4 H(+)(in) = ADP + phosphate + 5 H(+)(out). Its function is as follows. Produces ATP from ADP in the presence of a proton gradient across the membrane. The catalytic sites are hosted primarily by the beta subunits. The sequence is that of ATP synthase subunit beta from Sinorhizobium medicae (strain WSM419) (Ensifer medicae).